A 1197-amino-acid chain; its full sequence is Pleckstrin homology domain-containing family A member 7 (1197 aa).

WW domains follow at residues Asp8 to Thr41 and Ser53 to Thr86. The disordered stretch occupies residues Leu98–Asp148. The segment covering Ser111–Arg140 has biased composition (low complexity). One can recognise a PH domain in the interval Pro158 to Leu257. 3 disordered regions span residues Pro348–Pro384, Leu423–Ser467, and Phe508–Pro577. The segment covering Val528–Thr546 has biased composition (low complexity). Basic and acidic residues predominate over residues Thr568–Pro577. Residues Asp678 to Ser799 adopt a coiled-coil conformation. 2 disordered regions span residues Ser830–Asn928 and His1032–Gly1064. Basic and acidic residues predominate over residues Arg913–Ser924. The stretch at Gln1016–Leu1044 forms a coiled coil. Basic residues predominate over residues His1032–Asn1043.

It is found in the cell junction. It localises to the adherens junction. The protein resides in the cytoplasm. Its subcellular location is the cytoskeleton. The protein localises to the microtubule organizing center. It is found in the centrosome. Its function is as follows. Required for zonula adherens biogenesis and maintenance. This is Pleckstrin homology domain-containing family A member 7 (plekha7) from Danio rerio (Zebrafish).